Here is a 527-residue protein sequence, read N- to C-terminus: Eukaryotic translation initiation factor 4B1 (527 aa).

2 disordered regions span residues 1 to 370 and 453 to 527; these read MAKP…REVV and FGQR…RQGW. 2 stretches are compositionally biased toward low complexity: residues 35–45 and 74–85; these read AAAGGAASFPS and GAAGAPRRVAPA. Composition is skewed to basic and acidic residues over residues 102-155 and 181-194; these read PRER…DNWG and RSDD…DKKP. Positions 196 to 203 match the Nuclear localization signal motif; that stretch reads PSRYPSLG. The span at 203–232 shows a compositional bias: gly residues; the sequence is GTGGGFRESSGGGFRESSGGGFRESSGGGF. Over residues 293 to 317 the composition is skewed to basic and acidic residues; it reads KPREEVLAEKGLDWRKMEGEIEKKT. Low complexity predominate over residues 319–336; the sequence is RPTSSHSSRPNSAHSSRP. Composition is skewed to basic and acidic residues over residues 472-485 and 496-510; these read EEPH…DRPR and PVEE…RERG. A compositionally biased stretch (low complexity) spans 518-527; it reads SDRSSTRQGW.

Belongs to the eIF-4 subunit B family. As to quaternary structure, homodimer. Nonspherical monomer. mRNA-discriminating component of initiation complexes. Phosphorylated.

It localises to the nucleus. Promotes the eIF4F and eIF4A RNA-dependent ATP-hydrolysis activity with different efficiency depending on mRNAs, thus providing mRNA discrimination during initiation of translation. This chain is Eukaryotic translation initiation factor 4B1, found in Triticum aestivum (Wheat).